We begin with the raw amino-acid sequence, 352 residues long: Uroporphyrinogen decarboxylase (352 aa).

Substrate contacts are provided by residues 29–33, Phe48, Asp78, Tyr154, Ser209, and His322; that span reads RQAGR.

Belongs to the uroporphyrinogen decarboxylase family. In terms of assembly, homodimer.

It is found in the cytoplasm. It catalyses the reaction uroporphyrinogen III + 4 H(+) = coproporphyrinogen III + 4 CO2. It functions in the pathway porphyrin-containing compound metabolism; protoporphyrin-IX biosynthesis; coproporphyrinogen-III from 5-aminolevulinate: step 4/4. Functionally, catalyzes the decarboxylation of four acetate groups of uroporphyrinogen-III to yield coproporphyrinogen-III. This Bacillus pumilus (strain SAFR-032) protein is Uroporphyrinogen decarboxylase.